Reading from the N-terminus, the 434-residue chain is Gamma-glutamyl phosphate reductase (434 aa).

Polar residues predominate over residues 1–11 (MTNSNEAQENA). The tract at residues 1–26 (MTNSNEAQENALSPERQAERDEVLAK) is disordered. Positions 16 to 25 (RQAERDEVLA) are enriched in basic and acidic residues.

The protein belongs to the gamma-glutamyl phosphate reductase family.

It localises to the cytoplasm. It carries out the reaction L-glutamate 5-semialdehyde + phosphate + NADP(+) = L-glutamyl 5-phosphate + NADPH + H(+). It functions in the pathway amino-acid biosynthesis; L-proline biosynthesis; L-glutamate 5-semialdehyde from L-glutamate: step 2/2. Functionally, catalyzes the NADPH-dependent reduction of L-glutamate 5-phosphate into L-glutamate 5-semialdehyde and phosphate. The product spontaneously undergoes cyclization to form 1-pyrroline-5-carboxylate. This chain is Gamma-glutamyl phosphate reductase, found in Corynebacterium jeikeium (strain K411).